Reading from the N-terminus, the 2800-residue chain is Probable serine/threonine-protein kinase roco5 (2800 aa).

The span at 1-61 shows a compositional bias: basic and acidic residues; the sequence is MEVIKKEKKD…EKEKDKEKDG (61 aa). 3 disordered regions span residues 1–92, 123–225, and 417–437; these read MEVI…SAQS, TTTT…SPVD, and GINSANSNNNNNNSGGGSSGI. The span at 77–86 shows a compositional bias: pro residues; sequence PTPPPPPPPS. Composition is skewed to low complexity over residues 123-134 and 143-170; these read TTTTTTTTSSNN and NNNTSNNNINNNNKTSNTTGSNVSSSNN. A compositionally biased stretch (polar residues) spans 176–190; sequence INVTSLDSGGNNNAS. The span at 194–218 shows a compositional bias: basic and acidic residues; that stretch reads ISNEHSPKNRKEKEKEKDKDNKEDS. Positions 227–508 constitute a DH domain; the sequence is NRRKLVEGFM…VQVVKDIVNE (282 aa). A compositionally biased stretch (low complexity) spans 417–429; that stretch reads GINSANSNNNNNN. The 110-residue stretch at 540–649 folds into the PH domain; the sequence is KFLKEGILIE…WFQVLSQASL (110 aa). LRR repeat units lie at residues 777–800, 805–832, 834–856, and 861–885; these read NKSITHLTLSQNSINDPCAVALGD, NHSLIQMDLSENTIADKGLISLIDGILS, PSITVVILTQNQITDTGAKHISK, and NQTLNALFLEDNNITQSMGAEIIDQ. The tract at residues 926-946 is disordered; it reads KQLQVNQKSTTPSTSTSTTSS. Positions 934–946 are enriched in low complexity; that stretch reads STTPSTSTSTTSS. LRR repeat units lie at residues 971–984, 985–1007, 1008–1031, 1033–1056, 1058–1077, 1078–1101, 1128–1151, 1152–1174, 1175–1197, and 1199–1222; these read LNKLNMLSLDSRRI, SDLKELYLDHNCISSIPVSILKE, LKNLQILDLSNNQLSSLPSEISEM, ELKLLNVSHNNLSSLPIELGTLCK, NHLDISFNFIETINVNSLSQ, LVNLKVLMMQRNYFNRLPIEIFTR, AIKATKLDLSDCGLSALPIEIGSI, SSLIELDLTNNRIKDLPPQIGKL, SSLQTLNLSNNAIESLPWQLSQL, and TLKVLNITGNPISFDGASNAKISI. The 221-residue stretch at 1244–1464 folds into the Roc domain; sequence KEKPCMRMKL…NHIVKLGKAE (221 aa). GTP is bound by residues 1257–1264, 1348–1352, and 1407–1410; these read GQENVGKT, DFAGQ, and THLD. In terms of domain architecture, COR 1 spans 1473–1604; the sequence is RSYFQLENLI…KFEIVHPLPD (132 aa). Disordered stretches follow at residues 1605 to 1665 and 1688 to 1711; these read PKAT…SLLN and DQSTSPSNSTTPSPNTSSNNFSDS. Low complexity-rich tracts occupy residues 1610 to 1645, 1653 to 1665, and 1688 to 1707; these read SSSSSSPSTTQKSLNNSGSNLKSSGSAISTSSSSTT, RTNSTTNTTSLLN, and DQSTSPSNSTTPSPNTSSNN. The region spanning 1717-1790 is the COR 2 domain; sequence KSSTKHLVPI…VKEFWKNGLL (74 aa). Residues 1886–2008 show a composition bias toward low complexity; it reads SQQQHHQQQQ…LNPDSTSSSN (123 aa). Disordered stretches follow at residues 1886–2011 and 2050–2070; these read SQQQ…NETS and RNTNKPKINGTTGSGSSSSIV. The span at 2050 to 2059 shows a compositional bias: polar residues; sequence RNTNKPKING. Residues 2175-2440 form the Protein kinase domain; the sequence is LEIIEKVGEG…PTFIDIHSRL (266 aa). ATP-binding positions include 2181–2189 and Lys-2202; that span reads VGEGGFGIV. Asp-2300 serves as the catalytic Proton acceptor. 4 stretches are compositionally biased toward low complexity: residues 2452 to 2490, 2583 to 2654, 2669 to 2685, and 2694 to 2704; these read TTTNSAKSTISTGFNSNSGATTTTKPKSSTISSGSGTTS, LKTP…SPIS, TTQTTSTPPTNQTPNPT, and SSLSSNSINKP. 2 disordered regions span residues 2452 to 2498 and 2544 to 2800; these read TTTN…HPQL and AGGN…AIPK. Pro residues predominate over residues 2705–2723; the sequence is PSKPLPTPGGVTSPPPPPT. Polar residues predominate over residues 2730-2756; it reads IKFNSISAGNKTIGQSSTLPSSTLKQF. Residues 2757–2787 show a composition bias toward low complexity; it reads TANNNTSPSGSSSLPNSTVSSPSSSFLLRPT.

The protein belongs to the protein kinase superfamily. TKL Ser/Thr protein kinase family. ROCO subfamily.

The catalysed reaction is L-seryl-[protein] + ATP = O-phospho-L-seryl-[protein] + ADP + H(+). The enzyme catalyses L-threonyl-[protein] + ATP = O-phospho-L-threonyl-[protein] + ADP + H(+). In terms of biological role, may act as a serine/threonine-protein kinase and guanine-nucleotide releasing factor. This is Probable serine/threonine-protein kinase roco5 (roco5) from Dictyostelium discoideum (Social amoeba).